The primary structure comprises 62 residues: Large ribosomal subunit protein bL28 (62 aa).

The segment at 1–28 is disordered; the sequence is MARVCAITGRKARSGNSRSHAMNATKRK.

It belongs to the bacterial ribosomal protein bL28 family.

This chain is Large ribosomal subunit protein bL28, found in Bacillus thuringiensis (strain Al Hakam).